Reading from the N-terminus, the 1161-residue chain is Lateral signaling target protein 2 homolog (1161 aa).

6 disordered regions span residues 417–510 (ATGS…EVDD), 583–831 (AAGS…PTQS), 890–918 (MNSSPPEPDEPPEPSGSEEESKDSQHNHP), 935–978 (DQQN…SVES), 992–1014 (SSPVGAGGAGGGGMVGGSRTGQE), and 1029–1095 (GKAS…EPPR). Positions 419-429 (GSSGFGSGRGG) are enriched in gly residues. Basic residues predominate over residues 438–453 (PKQRHNQAHLRQRGAP). Positions 468-487 (GDDREPVVEEDNNNHLRKEI) are enriched in basic and acidic residues. Over residues 488–510 (EEEDVDDDMEEEEEDEEEDEVDD) the composition is skewed to acidic residues. Residues 583–601 (AAGSGGQQQQQQQQQLIDS) are compositionally biased toward low complexity. Acidic residues predominate over residues 669 to 704 (SDYEEADVDDEPDDVDADDDDEEEDDVVGEVEEQND). A compositionally biased stretch (basic residues) spans 728–742 (KAARNHRKSSHHRPR). The segment covering 743–757 (PSTSSSSSSAAYRNK) has biased composition (low complexity). Over residues 758-773 (SQSHQHHHHHHHHHHH) the composition is skewed to basic residues. Low complexity-rich tracts occupy residues 781 to 800 (GTSSVVSTITTSNNSTSNGS) and 807 to 831 (MQQQHQQHQQQRNSSSSCDTSPTQS). A compositionally biased stretch (acidic residues) spans 896-910 (EPDEPPEPSGSEEES). 2 stretches are compositionally biased toward polar residues: residues 935–948 (DQQNHSGGSSQSIY) and 956–967 (EQDSVFGSSGDS). A compositionally biased stretch (gly residues) spans 996-1010 (GAGGAGGGGMVGGSR). Residues 1054–1065 (SRSSPSSPVNSN) show a composition bias toward low complexity. Over residues 1081-1094 (TAHEQQRRMPEEPP) the composition is skewed to basic and acidic residues. The segment at 1099–1159 (DCDAPRCMAC…VCRDCYIHEV (61 aa)) adopts an FYVE-type zinc-finger fold. Zn(2+) is bound by residues Cys-1105, Cys-1108, Cys-1121, Cys-1124, Cys-1129, Cys-1132, Cys-1151, and Cys-1154.

Belongs to the lst-2 family.

Functionally, negative regulator of epidermal growth factor receptor (EGFR) signaling. The chain is Lateral signaling target protein 2 homolog from Anopheles gambiae (African malaria mosquito).